We begin with the raw amino-acid sequence, 314 residues long: Homoserine kinase (314 aa).

P97–T107 contacts ATP.

This sequence belongs to the GHMP kinase family. Homoserine kinase subfamily.

The protein localises to the cytoplasm. The enzyme catalyses L-homoserine + ATP = O-phospho-L-homoserine + ADP + H(+). Its pathway is amino-acid biosynthesis; L-threonine biosynthesis; L-threonine from L-aspartate: step 4/5. In terms of biological role, catalyzes the ATP-dependent phosphorylation of L-homoserine to L-homoserine phosphate. The protein is Homoserine kinase of Synechococcus sp. (strain RCC307).